Consider the following 438-residue polypeptide: UDP-N-acetylmuramoylalanine--D-glutamate ligase (438 aa).

112–118 (GSNGKST) contributes to the ATP binding site.

It belongs to the MurCDEF family.

The protein resides in the cytoplasm. It catalyses the reaction UDP-N-acetyl-alpha-D-muramoyl-L-alanine + D-glutamate + ATP = UDP-N-acetyl-alpha-D-muramoyl-L-alanyl-D-glutamate + ADP + phosphate + H(+). It functions in the pathway cell wall biogenesis; peptidoglycan biosynthesis. Functionally, cell wall formation. Catalyzes the addition of glutamate to the nucleotide precursor UDP-N-acetylmuramoyl-L-alanine (UMA). This is UDP-N-acetylmuramoylalanine--D-glutamate ligase from Yersinia pestis bv. Antiqua (strain Antiqua).